Here is a 194-residue protein sequence, read N- to C-terminus: Ribonuclease HII (194 aa).

An RNase H type-2 domain is found at 3-193 (ILTAGVDEAG…VRNLLAQQAL (191 aa)). A divalent metal cation is bound by residues Asp-9, Glu-10, and Asp-101.

This sequence belongs to the RNase HII family. Requires Mn(2+) as cofactor. Mg(2+) serves as cofactor.

The protein resides in the cytoplasm. It carries out the reaction Endonucleolytic cleavage to 5'-phosphomonoester.. Endonuclease that specifically degrades the RNA of RNA-DNA hybrids. In Neisseria gonorrhoeae (strain ATCC 700825 / FA 1090), this protein is Ribonuclease HII.